A 169-amino-acid chain; its full sequence is N-alpha-acetyltransferase 50 (169 aa).

Positions 6 to 155 (IELGDVTPHN…DAHVLQKNLK (150 aa)) constitute an N-acetyltransferase domain. Phosphothreonine is present on T12. Y31 provides a ligand contact to substrate. An N6-acetyllysine mark is found at K34 and K37. The active site involves Y73. M75 lines the substrate pocket. 77–90 (LGCLAPYRRLGIGT) is an acetyl-CoA binding site. At Y110 the chain carries Phosphotyrosine. Residue H112 is part of the active site. 117–126 (NESAIDFYRK) is a CoA binding site. The tract at residues 138-141 (YYKR) is substrate. Residue K140 is modified to N6-acetyllysine.

The protein belongs to the acetyltransferase family. GNAT subfamily. As to quaternary structure, component of the N-terminal acetyltransferase E (NatE) complex at least composed of NAA10, NAA15 and NAA50. Interacts with NAA10. Interacts with NAA15. Predominantly interacts with NAA15 in the N-terminal acetyltransferase A complex (NatA complex); the interactions reduce the acetylation activity of the NatA complex. Component of the N-terminal acetyltransferase E (NatE)/HYPK complex at least composed of NAA10, NAA15, NAA50 and HYPK. Within the complex interacts with NAA15. Its capacity to interact with the NatA complex is reduced by HYPK. Interacts with NAA35.

It localises to the cytoplasm. The protein resides in the nucleus. It carries out the reaction N-terminal L-methionyl-L-alanyl-[protein] + acetyl-CoA = N-terminal N(alpha)-acetyl-L-methionyl-L-alanyl-[protein] + CoA + H(+). It catalyses the reaction N-terminal L-methionyl-L-seryl-[protein] + acetyl-CoA = N-terminal N(alpha)-acetyl-L-methionyl-L-seryl-[protein] + CoA + H(+). The catalysed reaction is N-terminal L-methionyl-L-valyl-[protein] + acetyl-CoA = N-terminal N(alpha)-acetyl-L-methionyl-L-valyl-[protein] + CoA + H(+). The enzyme catalyses N-terminal L-methionyl-L-threonyl-[protein] + acetyl-CoA = N-terminal N(alpha)-acetyl-L-methionyl-L-threonyl-[protein] + CoA + H(+). It carries out the reaction N-terminal L-methionyl-L-lysyl-[protein] + acetyl-CoA = N-terminal N(alpha)-acetyl-L-methionyl-L-lysyl-[protein] + CoA + H(+). It catalyses the reaction N-terminal L-methionyl-L-leucyl-[protein] + acetyl-CoA = N-terminal N(alpha)-acetyl-L-methionyl-L-leucyl-[protein] + CoA + H(+). The catalysed reaction is N-terminal L-methionyl-L-phenylalanyl-[protein] + acetyl-CoA = N-terminal N(alpha)-acetyl-L-methionyl-L-phenylalanyl-[protein] + CoA + H(+). The enzyme catalyses N-terminal L-methionyl-L-tyrosyl-[protein] + acetyl-CoA = N-terminal N(alpha)-acetyl-L-methionyl-L-tyrosyl-[protein] + CoA + H(+). Functionally, N-alpha-acetyltransferase that acetylates the N-terminus of proteins that retain their initiating methionine. Has a broad substrate specificity: able to acetylate the initiator methionine of most peptides, except for those with a proline in second position. Also displays N-epsilon-acetyltransferase activity by mediating acetylation of the side chain of specific lysines on proteins. Autoacetylates in vivo. The relevance of N-epsilon-acetyltransferase activity is however unclear: able to acetylate H4 in vitro, but this result has not been confirmed in vivo. Component of N-alpha-acetyltransferase complexes containing NAA10 and NAA15, which has N-alpha-acetyltransferase activity. Does not influence the acetyltransferase activity of NAA10. However, it negatively regulates the N-alpha-acetyltransferase activity of the N-terminal acetyltransferase A complex (also called the NatA complex). The multiprotein complexes probably constitute the major contributor for N-terminal acetylation at the ribosome exit tunnel, with NAA10 acetylating all amino termini that are devoid of methionine and NAA50 acetylating other peptides. Required for sister chromatid cohesion during mitosis by promoting binding of CDCA5/sororin to cohesin: may act by counteracting the function of NAA10. This Bos taurus (Bovine) protein is N-alpha-acetyltransferase 50 (NAA50).